The following is a 68-amino-acid chain: Large ribosomal subunit protein uL30 (68 aa).

It belongs to the universal ribosomal protein uL30 family. Part of the 50S ribosomal subunit.

The protein is Large ribosomal subunit protein uL30 of Pseudarthrobacter chlorophenolicus (strain ATCC 700700 / DSM 12829 / CIP 107037 / JCM 12360 / KCTC 9906 / NCIMB 13794 / A6) (Arthrobacter chlorophenolicus).